A 284-amino-acid polypeptide reads, in one-letter code: NAD kinase (284 aa).

Asp-60 functions as the Proton acceptor in the catalytic mechanism. NAD(+) contacts are provided by residues Asp-60–Gly-61, Asn-134–Glu-135, Arg-145, Lys-162, Asp-164, Thr-175–Ser-180, and Gln-234.

Belongs to the NAD kinase family. The cofactor is a divalent metal cation.

The protein localises to the cytoplasm. It catalyses the reaction NAD(+) + ATP = ADP + NADP(+) + H(+). In terms of biological role, involved in the regulation of the intracellular balance of NAD and NADP, and is a key enzyme in the biosynthesis of NADP. Catalyzes specifically the phosphorylation on 2'-hydroxyl of the adenosine moiety of NAD to yield NADP. This Clostridium botulinum (strain Eklund 17B / Type B) protein is NAD kinase.